The chain runs to 346 residues: Cytidine deaminase 5 (346 aa).

2 consecutive CMP/dCMP-type deaminase domains span residues 20–148 (TDHK…FGSE) and 183–304 (DLCS…ITGA). Substrate is bound at residue 58–60 (NVE). Zn(2+) is bound at residue histidine 71. The active-site Proton donor is glutamate 73. Positions 104 and 107 each coordinate Zn(2+).

The protein belongs to the cytidine and deoxycytidylate deaminase family. Homodimer. Zn(2+) is required as a cofactor.

It catalyses the reaction cytidine + H2O + H(+) = uridine + NH4(+). It carries out the reaction 2'-deoxycytidine + H2O + H(+) = 2'-deoxyuridine + NH4(+). This enzyme scavenges exogenous and endogenous cytidine and 2'-deoxycytidine for UMP synthesis. The chain is Cytidine deaminase 5 (CDA5) from Arabidopsis thaliana (Mouse-ear cress).